A 415-amino-acid chain; its full sequence is Histidine--tRNA ligase (415 aa).

Belongs to the class-II aminoacyl-tRNA synthetase family. As to quaternary structure, homodimer.

The protein localises to the cytoplasm. It carries out the reaction tRNA(His) + L-histidine + ATP = L-histidyl-tRNA(His) + AMP + diphosphate + H(+). The sequence is that of Histidine--tRNA ligase from Rhodospirillum rubrum (strain ATCC 11170 / ATH 1.1.1 / DSM 467 / LMG 4362 / NCIMB 8255 / S1).